We begin with the raw amino-acid sequence, 281 residues long: Probable endonuclease 4 (281 aa).

9 residues coordinate Zn(2+): H69, H109, E145, D179, H182, H216, D229, H231, and E261.

It belongs to the AP endonuclease 2 family. It depends on Zn(2+) as a cofactor.

It catalyses the reaction Endonucleolytic cleavage to 5'-phosphooligonucleotide end-products.. Functionally, endonuclease IV plays a role in DNA repair. It cleaves phosphodiester bonds at apurinic or apyrimidinic (AP) sites, generating a 3'-hydroxyl group and a 5'-terminal sugar phosphate. In Pectobacterium carotovorum subsp. carotovorum (strain PC1), this protein is Probable endonuclease 4.